Here is a 400-residue protein sequence, read N- to C-terminus: Large envelope protein (400 aa).

Position 1 is an N-acetylmethionine (Met-1). Disordered regions lie at residues 1 to 53 (MGGW…DHWP), 88 to 118 (VPVA…SHPQ), and 145 to 169 (GSSS…SRTG). The N-myristoyl glycine; by host moiety is linked to residue Gly-2. The segment at 2–119 (GGWSSKPRQG…PPLRDSHPQA (118 aa)) is pre-S1. Residues 2–174 (GGWSSKPRQG…SSRTGDPAPN (173 aa)) form a pre-S region. The Virion surface; in external conformation portion of the chain corresponds to 2–181 (GGWSSKPRQG…APNMENTTSG (180 aa)). Residues 2–253 (GGWSSKPRQG…PGYRWMCLRR (252 aa)) are Intravirion; in internal conformation-facing. Trp-4 is a glycosylation site (N-linked (GlcNAc...) asparagine). Residues 96 to 106 (STNRQSGRQPT) are compositionally biased toward polar residues. Residues 120–174 (MQWNSTTFHQALLDPRVRGLYFPAGGSSSGTVNPVPTTASPISSISSRTGDPAPN) form a pre-S2 region. Over residues 155–166 (PTTASPISSISS) the composition is skewed to low complexity. A helical membrane pass occupies residues 182-202 (FLGPLLVLQAGFFLLTRILTI). Residues 203 to 253 (PQSLDSWWTSLNFLGGAPTCPGQNSQSPTSNHSPTSCPPICPGYRWMCLRR) lie on the Intravirion; in external conformation side of the membrane. The helical transmembrane segment at 254–274 (FIIFLFILLLCLIFLLVLLDY) threads the bilayer. The Virion surface segment spans residues 275–348 (QGMLPVCPLL…GASVRFSWLS (74 aa)). Asn-320 carries N-linked (GlcNAc...) asparagine; by host glycosylation. The chain crosses the membrane as a helical span at residues 349–369 (LLVPFVQWFVGLSPTVWLSVI). The Intravirion portion of the chain corresponds to 370 to 375 (WMMWYW). A helical transmembrane segment spans residues 376 to 398 (GPSLYNILSPFLPLLPIFFCLWV). Over 399–400 (YI) the chain is Virion surface.

Belongs to the orthohepadnavirus major surface antigen family. In its internal form (Li-HBsAg), interacts with the capsid protein and with the isoform S. Interacts with host chaperone CANX. In terms of assembly, associates with host chaperone CANX through its pre-S2 N glycan; this association may be essential for isoform M proper secretion. As to quaternary structure, interacts with isoform L. Interacts with the antigens of satellite virus HDV (HDVAgs); this interaction is required for encapsidation of HDV genomic RNA. Isoform M is N-terminally acetylated by host at a ratio of 90%, and N-glycosylated by host at the pre-S2 region. Post-translationally, myristoylated.

It localises to the virion membrane. The large envelope protein exists in two topological conformations, one which is termed 'external' or Le-HBsAg and the other 'internal' or Li-HBsAg. In its external conformation the protein attaches the virus to cell receptors and thereby initiating infection. This interaction determines the species specificity and liver tropism. This attachment induces virion internalization predominantly through caveolin-mediated endocytosis. The large envelope protein also assures fusion between virion membrane and endosomal membrane. In its internal conformation the protein plays a role in virion morphogenesis and mediates the contact with the nucleocapsid like a matrix protein. In terms of biological role, the middle envelope protein plays an important role in the budding of the virion. It is involved in the induction of budding in a nucleocapsid independent way. In this process the majority of envelope proteins bud to form subviral lipoprotein particles of 22 nm of diameter that do not contain a nucleocapsid. The sequence is that of Large envelope protein from Hepatitis B virus genotype C subtype adr (strain Japan/adr4/1983) (HBV-C).